Reading from the N-terminus, the 751-residue chain is Polyadenylate-binding protein, cytoplasmic and nuclear (751 aa).

2 stretches are compositionally biased toward polar residues: residues 1-26 (MSAE…NPAA) and 36-50 (ESAS…NQPH). The disordered stretch occupies residues 1-50 (MSAEVSTTPAADNTVNGTPEATNPAATSAPEVTAVESASPSATPSANQPH). RRM domains follow at residues 52 to 130 (ASLY…WSQR), 140 to 217 (GNVF…HHIS), 233 to 310 (TNVY…RAQK), and 336 to 458 (VNLY…LAQR). Disordered stretches follow at residues 371 to 413 (TVTA…KKTE) and 601 to 643 (GQGM…REEV). Over residues 379-413 (ESEKEKESNKENEKEGEEKTEEKPKESEEEAKKTE) the composition is skewed to basic and acidic residues. Residues 603–629 (GMRGPGYGQGRGGAPVQGGPRPQGGRG) show a composition bias toward gly residues. The region spanning 646–723 (TGGLTAQTLN…ALSVYDEYMK (78 aa)) is the PABC domain. A disordered region spans residues 725–751 (KGEGEAPAEPAKPKEDAAETATEENKS). Over residues 735–751 (AKPKEDAAETATEENKS) the composition is skewed to basic and acidic residues.

This sequence belongs to the polyadenylate-binding protein type-1 family.

Its subcellular location is the cytoplasm. It is found in the nucleus. In terms of biological role, binds the poly(A) tail of mRNA. Appears to be an important mediator of the multiple roles of the poly(A) tail in mRNA biogenesis, stability and translation. In the nucleus, involved in both mRNA cleavage and polyadenylation. Is also required for efficient mRNA export to the cytoplasm. Acts in concert with a poly(A)-specific nuclease (PAN) to affect poly(A) tail shortening, which may occur concomitantly with either nucleocytoplasmic mRNA transport or translational initiation. In the cytoplasm, stimulates translation initiation and regulates mRNA decay through translation termination-coupled poly(A) shortening, probably mediated by PAN. The sequence is that of Polyadenylate-binding protein, cytoplasmic and nuclear (pab1) from Neosartorya fischeri (strain ATCC 1020 / DSM 3700 / CBS 544.65 / FGSC A1164 / JCM 1740 / NRRL 181 / WB 181) (Aspergillus fischerianus).